Reading from the N-terminus, the 313-residue chain is Beta-ketoacyl-[acyl-carrier-protein] synthase III (313 aa).

Residues Cys-112 and His-238 contribute to the active site. Positions 239-243 are ACP-binding; that stretch reads QANIR. The active site involves Asn-268.

Belongs to the thiolase-like superfamily. FabH family. As to quaternary structure, homodimer.

The protein localises to the cytoplasm. It catalyses the reaction malonyl-[ACP] + acetyl-CoA + H(+) = 3-oxobutanoyl-[ACP] + CO2 + CoA. Its pathway is lipid metabolism; fatty acid biosynthesis. Catalyzes the condensation reaction of fatty acid synthesis by the addition to an acyl acceptor of two carbons from malonyl-ACP. Catalyzes the first condensation reaction which initiates fatty acid synthesis and may therefore play a role in governing the total rate of fatty acid production. Possesses both acetoacetyl-ACP synthase and acetyl transacylase activities. Its substrate specificity determines the biosynthesis of branched-chain and/or straight-chain of fatty acids. The chain is Beta-ketoacyl-[acyl-carrier-protein] synthase III from Staphylococcus aureus (strain bovine RF122 / ET3-1).